Here is a 274-residue protein sequence, read N- to C-terminus: Large ribosomal subunit protein uL2 (274 aa).

Positions 223–274 are disordered; that stretch reads VAMNPVDHPHGGGEGRTGEGRHAVDPWGNLTKGYRTRNNKRTQSMIVSRRKK. Positions 229–246 are enriched in basic and acidic residues; sequence DHPHGGGEGRTGEGRHAV.

This sequence belongs to the universal ribosomal protein uL2 family. In terms of assembly, part of the 50S ribosomal subunit. Forms a bridge to the 30S subunit in the 70S ribosome.

Its function is as follows. One of the primary rRNA binding proteins. Required for association of the 30S and 50S subunits to form the 70S ribosome, for tRNA binding and peptide bond formation. It has been suggested to have peptidyltransferase activity; this is somewhat controversial. Makes several contacts with the 16S rRNA in the 70S ribosome. The polypeptide is Large ribosomal subunit protein uL2 (Verminephrobacter eiseniae (strain EF01-2)).